The sequence spans 195 residues: dITP/XTP pyrophosphatase (195 aa).

Residue 8–13 (SNNQGK) participates in substrate binding. Residues Glu-39 and Asp-68 each coordinate Mg(2+). Asp-68 (proton acceptor) is an active-site residue. Substrate-binding positions include Ser-69, 149-152 (FGYD), Lys-172, and 177-178 (HR).

It belongs to the HAM1 NTPase family. As to quaternary structure, homodimer. It depends on Mg(2+) as a cofactor.

The enzyme catalyses XTP + H2O = XMP + diphosphate + H(+). It carries out the reaction dITP + H2O = dIMP + diphosphate + H(+). It catalyses the reaction ITP + H2O = IMP + diphosphate + H(+). Functionally, pyrophosphatase that catalyzes the hydrolysis of nucleoside triphosphates to their monophosphate derivatives, with a high preference for the non-canonical purine nucleotides XTP (xanthosine triphosphate), dITP (deoxyinosine triphosphate) and ITP. Seems to function as a house-cleaning enzyme that removes non-canonical purine nucleotides from the nucleotide pool, thus preventing their incorporation into DNA/RNA and avoiding chromosomal lesions. This is dITP/XTP pyrophosphatase from Staphylococcus aureus (strain Mu50 / ATCC 700699).